A 1387-amino-acid polypeptide reads, in one-letter code: Mediator of RNA polymerase II transcription subunit 13 (1387 aa).

3 disordered regions span residues 81–102 (ELNNESESPQPERKGHFTPEFS), 354–400 (HSAN…ESYS), and 620–676 (SVNS…DIPM). Polar residues-rich tracts occupy residues 354 to 367 (HSANNSNNVSSTGE) and 390 to 400 (SRQNFPTESYS).

Belongs to the Mediator complex subunit 13 family. Component of the SRB8-11 complex, which itself associates with the Mediator complex.

It localises to the nucleus. Functionally, component of the SRB8-11 complex. The SRB8-11 complex is a regulatory module of the Mediator complex which is itself involved in regulation of basal and activated RNA polymerase II-dependent transcription. The SRB8-11 complex may be involved in the transcriptional repression of a subset of genes regulated by Mediator. It may inhibit the association of the Mediator complex with RNA polymerase II to form the holoenzyme complex. The protein is Mediator of RNA polymerase II transcription subunit 13 (SSN2) of Kluyveromyces lactis (strain ATCC 8585 / CBS 2359 / DSM 70799 / NBRC 1267 / NRRL Y-1140 / WM37) (Yeast).